Here is a 409-residue protein sequence, read N- to C-terminus: DEP domain-containing mTOR-interacting protein (409 aa).

M1 is modified (N-acetylmethionine). Over residues 1-10 (MEEGSSGGSG) the composition is skewed to gly residues. The disordered stretch occupies residues 1 to 23 (MEEGSSGGSGSSDSNAGGSGGVQ). DEP domains are found at residues 36–119 (TGEQ…RFRK) and 146–219 (PETT…QFRM). The short motif at 217–235 (FRMNFRRRRRLMELLNETS) is the DDEX motif element. The residue at position 235 (S235) is a Phosphoserine. T241 is modified (phosphothreonine). Phosphoserine occurs at positions 244 and 258. A Phosphothreonine modification is found at T259. Phosphoserine occurs at positions 263, 265, 280, 282, 283, 286, and 287. Residues 286 to 291 (SSGYFS) carry the BetaTrCP degron motif motif. Phosphotyrosine is present on Y289. A phosphoserine mark is found at S291 and S293. T295 bears the Phosphothreonine mark. Phosphoserine is present on residues S297, S298, and S299. In terms of domain architecture, PDZ spans 330–407 (TFTIVGDAVG…TIVMEVMEEL (78 aa)).

Associated component of the mechanistic target of rapamycin complex 1 (mTORC1) which contains MTOR, MLST8 and RPTOR. Associated component of the mechanistic target of rapamycin complex 2 (mTORC2) which contains MTOR, MLST8, PROTOR1, RICTOR, MAPKAP1 and DEPTOR. Interacts (via PDZ domain) with MTOR; interacts with MTOR within both mTORC1 and mTORC2. Interacts (via PDZ domain) with MINAR1 (via N-terminus). Interacts with SIK3. In terms of processing, phosphorylation weakens interaction with MTOR within mTORC1 and mTORC2. Phosphorylated at Ser-286, Ser-287 and Ser-291 in response to mitogenic stimulation by MTOR: DEPTOR is either directly phosphorylated by MTOR or indirectly via proteins kinases that are activated by MTOR, such as CK1/CSNK1A1. Phosphorylation at Ser-286, Ser-287 and Ser-291 promotes ubiquitination by the SCF(BTRC) complex, followed by degradation. Phosphorylation at Ser-235 by MAPK3/ERK1 promotes deubiquitination by USP7, enhancing its stability. Phosphorylation at Tyr-291 by SYK impairs its interaction with MTOR, promoting mTORC1 and mTORC2 signaling. Post-translationally, ubiquitinated; leading to proteasomal degradation. Ubiquitination by the SCF(BTRC) and SCF(FBXW11) complexes following phosphorylation at Ser-286, Ser-287 and Ser-291 by MTOR, leads to its degradation by the proteasome. Deubiquitinated by OTUB1 in response to amino acid via a non-canonical mechanism, leading to DEPTOR stability. Deubiquitinated by USP7 following phosphorylation at Ser-235, promoting its stability.

It is found in the lysosome membrane. Its activity is regulated as follows. Inhibited upon phosphatidic acid-binding: phosphatidic acid produced upon mitogenic stimulation promotes DEPTOR dissociatiom from the mTORC1 and mTORC2 complexes, leading to their activation. Specifically binds unsaturated phosphatidic acid, such as 16:0-18:1, 18:0-18:1 and di-18:1. Inhibited when nutrients are present via a feedback loop: phosphorylation by MTOR promotes DEPTOR ubiquitination and degradation. Its function is as follows. Negative regulator of the mTORC1 and mTORC2 complexes: inhibits the protein kinase activity of MTOR, thereby inactivating both complexes. DEPTOR inhibits mTORC1 and mTORC2 to induce autophagy. In contrast to AKT1S1/PRAS40, only partially inhibits mTORC1 activity. This chain is DEP domain-containing mTOR-interacting protein, found in Mus musculus (Mouse).